Reading from the N-terminus, the 357-residue chain is UDP-N-acetylglucosamine--N-acetylmuramyl-(pentapeptide) pyrophosphoryl-undecaprenol N-acetylglucosamine transferase (357 aa).

Residues 13–15, Asn-122, Arg-163, Ser-191, and Gln-288 each bind UDP-N-acetyl-alpha-D-glucosamine; that span reads TGG.

The protein belongs to the glycosyltransferase 28 family. MurG subfamily.

It is found in the cell inner membrane. It carries out the reaction di-trans,octa-cis-undecaprenyl diphospho-N-acetyl-alpha-D-muramoyl-L-alanyl-D-glutamyl-meso-2,6-diaminopimeloyl-D-alanyl-D-alanine + UDP-N-acetyl-alpha-D-glucosamine = di-trans,octa-cis-undecaprenyl diphospho-[N-acetyl-alpha-D-glucosaminyl-(1-&gt;4)]-N-acetyl-alpha-D-muramoyl-L-alanyl-D-glutamyl-meso-2,6-diaminopimeloyl-D-alanyl-D-alanine + UDP + H(+). It participates in cell wall biogenesis; peptidoglycan biosynthesis. Functionally, cell wall formation. Catalyzes the transfer of a GlcNAc subunit on undecaprenyl-pyrophosphoryl-MurNAc-pentapeptide (lipid intermediate I) to form undecaprenyl-pyrophosphoryl-MurNAc-(pentapeptide)GlcNAc (lipid intermediate II). The chain is UDP-N-acetylglucosamine--N-acetylmuramyl-(pentapeptide) pyrophosphoryl-undecaprenol N-acetylglucosamine transferase from Gloeobacter violaceus (strain ATCC 29082 / PCC 7421).